The primary structure comprises 247 residues: Probable transcriptional regulatory protein DvMF_3201 (247 aa).

The interval 1 to 21 (MAGHSKWANIQHRKGRQDAKR) is disordered.

This sequence belongs to the TACO1 family.

The protein resides in the cytoplasm. The protein is Probable transcriptional regulatory protein DvMF_3201 of Nitratidesulfovibrio vulgaris (strain DSM 19637 / Miyazaki F) (Desulfovibrio vulgaris).